Consider the following 275-residue polypeptide: MTLQQEIIQALGAKPHINPEEEIRRSVDFLKAYLKTYPFLKSLVLGISGGQDSTLAGKLSQMAIAELREETGDNALQFIAVRLPYGVQADEQDCQDAIAFIQPDRVLTVNIKGAVLASEQALREAGIELSDFVRGNEKARERMKAQYSIAGMTHGVVVGTDHAAEAITGFFTKYGDGGTDINPLHRLNKRQGKQLLAALGCPEHLYKKVPTADLEDDRPSLPDEAALGVTYDNIDDYLEGKTLDPAIAKTIEGWYVKTEHKRRLPITVFDDFWKK.

Residue 46-53 participates in ATP binding; it reads GISGGQDS. Mg(2+) is bound at residue Asp-52. Arg-140 contacts deamido-NAD(+). Thr-160 contributes to the ATP binding site. Mg(2+) is bound at residue Glu-165. Deamido-NAD(+)-binding residues include Lys-173 and Asp-180. ATP contacts are provided by Lys-189 and Thr-211. 260–261 contributes to the deamido-NAD(+) binding site; sequence HK.

The protein belongs to the NAD synthetase family. In terms of assembly, homodimer.

It catalyses the reaction deamido-NAD(+) + NH4(+) + ATP = AMP + diphosphate + NAD(+) + H(+). Its pathway is cofactor biosynthesis; NAD(+) biosynthesis; NAD(+) from deamido-NAD(+) (ammonia route): step 1/1. Catalyzes the ATP-dependent amidation of deamido-NAD to form NAD. Uses ammonia as a nitrogen source. In Salmonella dublin (strain CT_02021853), this protein is NH(3)-dependent NAD(+) synthetase.